The following is a 361-amino-acid chain: Spermatogenesis-associated protein 17 (361 aa).

IQ domains lie at 32–61 (ENDAAVKIQSWFRGCQVRAYVRHLNRIVTI), 55–84 (LNRIVTIIQKWWRSFLGRKQYQLTVQVAYY), and 91–120 (YNAMAVRKQRRWRGYRVRKYLFNYYYLKEY).

It is found in the cytoplasm. The polypeptide is Spermatogenesis-associated protein 17 (SPATA17) (Macaca fascicularis (Crab-eating macaque)).